Reading from the N-terminus, the 672-residue chain is Rho GTPase-activating protein 40 (672 aa).

Residues 43-68 form a disordered region; that stretch reads GCSPGLSTGPTNLQQHPQKPRPADCS. The segment covering 47–59 has biased composition (polar residues); that stretch reads GLSTGPTNLQQHP. The Rho-GAP domain occupies 321–519; sequence VPLHSLLEAD…MMVQYQDLLW (199 aa).

In terms of biological role, GTPase activator for the Rho-type GTPases by converting them to an inactive GDP-bound state. The polypeptide is Rho GTPase-activating protein 40 (Mus musculus (Mouse)).